We begin with the raw amino-acid sequence, 453 residues long: DNA repair protein RadA (453 aa).

The segment at 10 to 27 (CQECGYQSPKYLGRCPNC) adopts a C4-type zinc-finger fold. 95–102 (GDPGIGKS) contributes to the ATP binding site. The RadA KNRFG motif signature appears at 251–255 (KNRFG). A lon-protease-like region spans residues 350 to 453 (DAYLKSAGGV…VGQVLKAVFS (104 aa)).

The protein belongs to the RecA family. RadA subfamily.

Functionally, DNA-dependent ATPase involved in processing of recombination intermediates, plays a role in repairing DNA breaks. Stimulates the branch migration of RecA-mediated strand transfer reactions, allowing the 3' invading strand to extend heteroduplex DNA faster. Binds ssDNA in the presence of ADP but not other nucleotides, has ATPase activity that is stimulated by ssDNA and various branched DNA structures, but inhibited by SSB. Does not have RecA's homology-searching function. The sequence is that of DNA repair protein RadA from Streptococcus pyogenes serotype M6 (strain ATCC BAA-946 / MGAS10394).